The sequence spans 384 residues: S-adenosylmethionine synthase (384 aa).

His15 serves as a coordination point for ATP. Mg(2+) is bound at residue Asp17. A K(+)-binding site is contributed by Glu43. L-methionine contacts are provided by Glu56 and Gln99. The segment at 99 to 109 is flexible loop; it reads QSPDINQGVDR. Residues 164-166, 230-231, Asp239, 245-246, Ala262, and Lys266 contribute to the ATP site; these read DAK, RF, and RK. Asp239 lines the L-methionine pocket. Residue Lys270 participates in L-methionine binding.

The protein belongs to the AdoMet synthase family. Homotetramer; dimer of dimers. Mg(2+) is required as a cofactor. K(+) serves as cofactor.

It localises to the cytoplasm. The catalysed reaction is L-methionine + ATP + H2O = S-adenosyl-L-methionine + phosphate + diphosphate. The protein operates within amino-acid biosynthesis; S-adenosyl-L-methionine biosynthesis; S-adenosyl-L-methionine from L-methionine: step 1/1. Its function is as follows. Catalyzes the formation of S-adenosylmethionine (AdoMet) from methionine and ATP. The overall synthetic reaction is composed of two sequential steps, AdoMet formation and the subsequent tripolyphosphate hydrolysis which occurs prior to release of AdoMet from the enzyme. In Citrobacter koseri (strain ATCC BAA-895 / CDC 4225-83 / SGSC4696), this protein is S-adenosylmethionine synthase.